Reading from the N-terminus, the 244-residue chain is tRNA pseudouridine synthase A (244 aa).

Asp-52 (nucleophile) is an active-site residue. Residue Tyr-110 participates in substrate binding.

Belongs to the tRNA pseudouridine synthase TruA family. Homodimer.

It catalyses the reaction uridine(38/39/40) in tRNA = pseudouridine(38/39/40) in tRNA. Formation of pseudouridine at positions 38, 39 and 40 in the anticodon stem and loop of transfer RNAs. This chain is tRNA pseudouridine synthase A, found in Thermoanaerobacter pseudethanolicus (strain ATCC 33223 / 39E) (Clostridium thermohydrosulfuricum).